A 263-amino-acid polypeptide reads, in one-letter code: Endonuclease 8 (263 aa).

The active-site Schiff-base intermediate with DNA is Pro2. Catalysis depends on Glu3, which acts as the Proton donor. Lys53 acts as the Proton donor; for beta-elimination activity in catalysis. Gln70, Arg125, and Asn169 together coordinate DNA. The segment at Lys229–His263 adopts an FPG-type zinc-finger fold. Arg253 functions as the Proton donor; for delta-elimination activity in the catalytic mechanism.

It belongs to the FPG family. Zn(2+) serves as cofactor.

The enzyme catalyses 2'-deoxyribonucleotide-(2'-deoxyribose 5'-phosphate)-2'-deoxyribonucleotide-DNA = a 3'-end 2'-deoxyribonucleotide-(2,3-dehydro-2,3-deoxyribose 5'-phosphate)-DNA + a 5'-end 5'-phospho-2'-deoxyribonucleoside-DNA + H(+). Functionally, involved in base excision repair of DNA damaged by oxidation or by mutagenic agents. Acts as a DNA glycosylase that recognizes and removes damaged bases. Has a preference for oxidized pyrimidines, such as thymine glycol, 5,6-dihydrouracil and 5,6-dihydrothymine. Has AP (apurinic/apyrimidinic) lyase activity and introduces nicks in the DNA strand. Cleaves the DNA backbone by beta-delta elimination to generate a single-strand break at the site of the removed base with both 3'- and 5'-phosphates. This chain is Endonuclease 8, found in Shigella boydii serotype 4 (strain Sb227).